The following is a 104-amino-acid chain: Urease subunit beta (104 aa).

This sequence belongs to the urease beta subunit family. In terms of assembly, heterotrimer of UreA (gamma), UreB (beta) and UreC (alpha) subunits. Three heterotrimers associate to form the active enzyme.

It localises to the cytoplasm. The enzyme catalyses urea + 2 H2O + H(+) = hydrogencarbonate + 2 NH4(+). It functions in the pathway nitrogen metabolism; urea degradation; CO(2) and NH(3) from urea (urease route): step 1/1. The sequence is that of Urease subunit beta from Rhodopseudomonas palustris (strain BisB18).